We begin with the raw amino-acid sequence, 1112 residues long: MEKSSNRRFGVRTVAAIVAGLMVGGMCTAMTASAADDSAAGYSATAPVNLTRPATVPSMDGWTDGTGAWTLGEGTRVVSSDALAARAQSLASELTKFTDVDIKAATGSATGKDISLTLDASKKAELGDEGFKLNIGSKGLEVIGATDIGVFYGTRSVSQMLRQGQLTLPAGTVATKPKYKERGATLCACQINISTDWIDRFLSDMADLRLNYVLLEMKLKPEEDNTKKAATWSYYTRDDVKKFVKKANNYGIDVIPEINSPGHMNVWLENYPEYQLADNSGRKDPNKLDISNPEAVKFYKTLIDEYDGVFTTKYWHMGADEYMIGTSFDNYSKLKTFAEKQYGAGATPNDAFTGFINDIDKYVKAKGKQLRIWNDGIVNTKNVSLNKDIVIEYWYGAGRKPQELVQDGYTLMNATQALYWSRSAQVYKVNAARLYNNNWNVGTFDGGRQIDKNYDKLTGAKVSIWPDSSYFQTENEVEKEIFDGMRFISQMTWSDSRPWATWNDMKADIDKIGYPLDIREYDYTPVDAGIYDIPQLKSISKGPWELITTPDGYYQMKDTVSGKCLALFTGSKHLDVVTQVGARPELRNCADVSVGQDQRNTANERNTQKWQIRADKDGKYTISPALTQQRLAIATGNEQNIDLETHRPAAGTVAQFPADLVSDNALFTLTGHMGMSATVDSKTVNPASPSKITVKVRAASNANTGDVTVTPVVPEGWEIKPGSVSLKSIPAGKAAIAYFNVVNTTGTGDATVQFKLTNTKTGEELGTTSVALTGSLTKDVEASDYAASSQETTGEHAPVGNAFDKNANTFWHSKYSNPSANLPHWLAFKASPGEGNKIAAITHLYRQDKLNGPAKNVAVYVVAASDANSVADVTNWGEPVATAEFPYTKELQTIALPNTIPSGDVYVKFQINDAWGLTETSAGVTWAAVAELAATAKATPVELTEPEQPKDNPEVTETPEATGVTVSGDGVANGALSLKKGTTAQLTAKVAPDDADQAVTWASSDDKVVTVDKTGKVTAVAKGVAKVTATTANGKSASVTVTVTEDSEVPGPTGPTEPTKPGTEKPTTKPTTKPNDGKLSATGADTAVLATIAALFALAGGAVVAVRRRSVR.

An N-terminal signal peptide occupies residues 1 to 34; it reads MEKSSNRRFGVRTVAAIVAGLMVGGMCTAMTASA. A disulfide bridge connects residues C187 and C189. Residues Q190, E216, N259, D320, E321, Y419, and D467 each coordinate beta-D-galactosyl-(1-&gt;3)-N-acetyl-D-glucosamine. The active-site Proton donor/acceptor is E321. A disulfide bridge links C564 with C589. The interval 938–969 is disordered; that stretch reads ATPVELTEPEQPKDNPEVTETPEATGVTVSGD. The 67-residue stretch at 975-1041 folds into the BIG2 domain; that stretch reads ALSLKKGTTA…ANGKSASVTV (67 aa). Positions 1044 to 1061 are enriched in low complexity; sequence TEDSEVPGPTGPTEPTKP. A disordered region spans residues 1044–1081; sequence TEDSEVPGPTGPTEPTKPGTEKPTTKPTTKPNDGKLSA. A helical transmembrane segment spans residues 1086 to 1106; it reads TAVLATIAALFALAGGAVVAV.

Belongs to the glycosyl hydrolase 20 family.

The protein resides in the cell membrane. It catalyses the reaction beta-D-Gal-(1-&gt;3)-beta-D-GlcNAc-(1-&gt;3)-beta-D-Gal-(1-&gt;4)-D-Glc + H2O = beta-D-galactosyl-(1-&gt;3)-N-acetyl-D-glucosamine + lactose. Functionally, present in the infant gut, this enzyme is involved in the assimilation of type-1 human milk oligosaccharides (HMOs). It hydrolyzes via a retaining mechanism the beta-D-GlcNAc-(1-&gt;3)-beta-D-Gal linkage in lacto-N-tetraose (LNT or beta-D-Gal-(1-&gt;3)-beta-D-GlcNAc-(1-&gt;3)-beta-D-Gal-(1-&gt;4)-D-Glc), an abundant HMO unique to human breast milk, releasing lacto-N-biose (LNB or beta-D-Gal-(1-&gt;3)-D-GlcNAc) and lactose. Is a key enzymatic factor for growth and proliferation of B.bifidum in the gut ecosystem of breast-fed infants. Has substrate preference for unmodified beta-linked LNB since it does not hydrolyze the fucosylated forms of lacto-N-tetraose (lacto-N-fucopentaose I and II) or lacto-N-neotetraose. Is also able to display transglycosylation activity in vitro. This chain is Lacto-N-biosidase, found in Bifidobacterium bifidum (strain DSM 20082 / JCM 1254 / BCRC 11844 / KCTC 3440 / E319f (Variant a)).